Consider the following 873-residue polypeptide: Valine--tRNA ligase (873 aa).

The 'HIGH' region signature appears at 46 to 56; it reads PNVTGKLHIGH. The short motif at 525–529 is the 'KMSKS' region element; the sequence is KMSKS. Lys-528 is an ATP binding site. Positions 804-873 form a coiled coil; sequence NDDFIDKEKM…ELIQDKLNKM (70 aa).

The protein belongs to the class-I aminoacyl-tRNA synthetase family. ValS type 1 subfamily. In terms of assembly, monomer.

The protein localises to the cytoplasm. It carries out the reaction tRNA(Val) + L-valine + ATP = L-valyl-tRNA(Val) + AMP + diphosphate. Catalyzes the attachment of valine to tRNA(Val). As ValRS can inadvertently accommodate and process structurally similar amino acids such as threonine, to avoid such errors, it has a 'posttransfer' editing activity that hydrolyzes mischarged Thr-tRNA(Val) in a tRNA-dependent manner. The sequence is that of Valine--tRNA ligase from Mesoplasma florum (strain ATCC 33453 / NBRC 100688 / NCTC 11704 / L1) (Acholeplasma florum).